The chain runs to 329 residues: GTPase Obg (329 aa).

The Obg domain maps to 1 to 159 (MQFIDQARIT…WPLQLELKLL (159 aa)). In terms of domain architecture, OBG-type G spans 160–328 (AEVGIIGLPN…LLDQVWQLLG (169 aa)). Residues 166–173 (GLPNAGKS), 191–195 (FTTLV), 213–216 (DIPG), 280–283 (NKLE), and 309–311 (SAV) contribute to the ATP site. Serine 173 and threonine 193 together coordinate Mg(2+).

Belongs to the TRAFAC class OBG-HflX-like GTPase superfamily. OBG GTPase family. As to quaternary structure, monomer. Mg(2+) is required as a cofactor.

The protein localises to the cytoplasm. In terms of biological role, an essential GTPase which binds GTP, GDP and possibly (p)ppGpp with moderate affinity, with high nucleotide exchange rates and a fairly low GTP hydrolysis rate. Plays a role in control of the cell cycle, stress response, ribosome biogenesis and in those bacteria that undergo differentiation, in morphogenesis control. This chain is GTPase Obg, found in Synechococcus sp. (strain WH7803).